Reading from the N-terminus, the 264-residue chain is Major prion protein (264 aa).

A signal peptide spans Met-1–Cys-24. Residues Lys-25–Tyr-41 form an interaction with ADGRG6 region. The tract at residues Lys-25–Ala-241 is interaction with GRB2, ERI3 and SYN1. The segment at Pro-28–Asn-119 is disordered. Tandem repeats lie at residues Pro-54–Gln-62, Pro-63–Gln-70, Pro-71–Gln-78, Pro-79–Gln-86, Pro-87–Gln-94, and Pro-95–Gln-103. The 6 X 8 AA tandem repeats of P-H-G-G-G-W-G-Q stretch occupies residues Pro-54 to Gln-103. Gly residues predominate over residues Gln-55–His-107. Positions 72, 73, 74, 80, 81, 82, 88, 89, 90, 96, 98, and 99 each coordinate Cu(2+). Cys-190 and Cys-225 are oxidised to a cystine. 2 N-linked (GlcNAc...) asparagine glycosylation sites follow: Asn-192 and Asn-208. The GPI-anchor amidated alanine moiety is linked to residue Ala-241. The propeptide at Ser-242–Gly-264 is removed in mature form.

Belongs to the prion family. Monomer and homodimer. Has a tendency to aggregate into amyloid fibrils containing a cross-beta spine, formed by a steric zipper of superposed beta-strands. Soluble oligomers may represent an intermediate stage on the path to fibril formation. Copper binding may promote oligomerization. Interacts with GRB2, APP, ERI3/PRNPIP and SYN1. Mislocalized cytosolically exposed PrP interacts with MGRN1; this interaction alters MGRN1 subcellular location and causes lysosomal enlargement. Interacts with APP. Interacts with KIAA1191. Interacts with ADGRG6.

It is found in the cell membrane. The protein resides in the golgi apparatus. Its primary physiological function is unclear. May play a role in neuronal development and synaptic plasticity. May be required for neuronal myelin sheath maintenance. May promote myelin homeostasis through acting as an agonist for ADGRG6 receptor. May play a role in iron uptake and iron homeostasis. Soluble oligomers are toxic to cultured neuroblastoma cells and induce apoptosis (in vitro). Association with GPC1 (via its heparan sulfate chains) targets PRNP to lipid rafts. Also provides Cu(2+) or Zn(2+) for the ascorbate-mediated GPC1 deaminase degradation of its heparan sulfate side chains. The sequence is that of Major prion protein (PRNP) from Bos indicus x Bos taurus (Hybrid cattle).